Consider the following 151-residue polypeptide: Ubiquitin-conjugating enzyme E2 2 (151 aa).

Residues Ala4 to Glu150 form the UBC core domain. Cys88 acts as the Glycyl thioester intermediate in catalysis.

The protein belongs to the ubiquitin-conjugating enzyme family.

It localises to the cytoplasm. Its subcellular location is the nucleus. The catalysed reaction is S-ubiquitinyl-[E1 ubiquitin-activating enzyme]-L-cysteine + [E2 ubiquitin-conjugating enzyme]-L-cysteine = [E1 ubiquitin-activating enzyme]-L-cysteine + S-ubiquitinyl-[E2 ubiquitin-conjugating enzyme]-L-cysteine.. It functions in the pathway protein modification; protein ubiquitination. Catalyzes the covalent attachment of ubiquitin to other proteins. Plays a role in transcription regulation by catalyzing the monoubiquitination of histone H2B to form H2BK123ub1. H2BK123ub1 gives a specific tag for epigenetic transcriptional activation and is also a prerequisite for H3K4me and H3K79me formation. Also involved in postreplication repair of UV-damaged DNA, in N-end rule-dependent protein degradation and in sporulation. The sequence is that of Ubiquitin-conjugating enzyme E2 2 (mus-8) from Neurospora crassa (strain ATCC 24698 / 74-OR23-1A / CBS 708.71 / DSM 1257 / FGSC 987).